Here is a 394-residue protein sequence, read N- to C-terminus: Quinolinate synthase (394 aa).

2 residues coordinate iminosuccinate: histidine 57 and serine 74. Cysteine 121 contacts [4Fe-4S] cluster. Iminosuccinate is bound by residues 153–155 (YMN) and serine 174. A [4Fe-4S] cluster-binding site is contributed by cysteine 250. Residues 276–278 (HPE) and threonine 293 contribute to the iminosuccinate site. Cysteine 340 lines the [4Fe-4S] cluster pocket.

The protein belongs to the quinolinate synthase family. Type 3 subfamily. [4Fe-4S] cluster is required as a cofactor.

Its subcellular location is the cytoplasm. The enzyme catalyses iminosuccinate + dihydroxyacetone phosphate = quinolinate + phosphate + 2 H2O + H(+). It participates in cofactor biosynthesis; NAD(+) biosynthesis; quinolinate from iminoaspartate: step 1/1. Catalyzes the condensation of iminoaspartate with dihydroxyacetone phosphate to form quinolinate. The chain is Quinolinate synthase from Nocardioides sp. (strain ATCC BAA-499 / JS614).